Reading from the N-terminus, the 360-residue chain is DNA replication and repair protein RecF (360 aa).

30 to 37 (GHNGSGKT) is a binding site for ATP.

Belongs to the RecF family.

Its subcellular location is the cytoplasm. Its function is as follows. The RecF protein is involved in DNA metabolism; it is required for DNA replication and normal SOS inducibility. RecF binds preferentially to single-stranded, linear DNA. It also seems to bind ATP. The protein is DNA replication and repair protein RecF of Shewanella amazonensis (strain ATCC BAA-1098 / SB2B).